A 437-amino-acid chain; its full sequence is Integrase (437 aa).

In terms of domain architecture, Core-binding (CB) spans 73–158 (WTVERWLTHW…TARTAFGEAY (86 aa)). A Tyr recombinase domain is found at 179-428 (EEVEPLEVED…DSVRNDVADR (250 aa)). Catalysis depends on residues arginine 214, lysine 245, histidine 379, arginine 382, and tryptophan 405. The active-site O-(3'-phospho-DNA)-tyrosine intermediate is tyrosine 414.

This sequence belongs to the 'phage' integrase family.

Is a recombinase (or integrase), catalyzing the cutting and rejoining of the recombining DNA molecules. The chain is Integrase (int) from Saccharopolyspora erythraea (Streptomyces erythraeus).